We begin with the raw amino-acid sequence, 178 residues long: Crossover junction endodeoxyribonuclease RuvC (178 aa).

Active-site residues include Asp-20, Glu-80, and Asp-154. Residues Asp-20, Glu-80, and Asp-154 each contribute to the Mg(2+) site.

Belongs to the RuvC family. As to quaternary structure, homodimer which binds Holliday junction (HJ) DNA. The HJ becomes 2-fold symmetrical on binding to RuvC with unstacked arms; it has a different conformation from HJ DNA in complex with RuvA. In the full resolvosome a probable DNA-RuvA(4)-RuvB(12)-RuvC(2) complex forms which resolves the HJ. Requires Mg(2+) as cofactor.

It localises to the cytoplasm. The catalysed reaction is Endonucleolytic cleavage at a junction such as a reciprocal single-stranded crossover between two homologous DNA duplexes (Holliday junction).. The RuvA-RuvB-RuvC complex processes Holliday junction (HJ) DNA during genetic recombination and DNA repair. Endonuclease that resolves HJ intermediates. Cleaves cruciform DNA by making single-stranded nicks across the HJ at symmetrical positions within the homologous arms, yielding a 5'-phosphate and a 3'-hydroxyl group; requires a central core of homology in the junction. The consensus cleavage sequence is 5'-(A/T)TT(C/G)-3'. Cleavage occurs on the 3'-side of the TT dinucleotide at the point of strand exchange. HJ branch migration catalyzed by RuvA-RuvB allows RuvC to scan DNA until it finds its consensus sequence, where it cleaves and resolves the cruciform DNA. The polypeptide is Crossover junction endodeoxyribonuclease RuvC (Rhodopirellula baltica (strain DSM 10527 / NCIMB 13988 / SH1)).